We begin with the raw amino-acid sequence, 484 residues long: Glutamate--tRNA ligase (484 aa).

The 'HIGH' region signature appears at 12 to 22 (PSPTGEPHVGT). Residues 253–257 (KLSKR) carry the 'KMSKS' region motif. Lysine 256 serves as a coordination point for ATP.

This sequence belongs to the class-I aminoacyl-tRNA synthetase family. Glutamate--tRNA ligase type 1 subfamily. In terms of assembly, monomer.

Its subcellular location is the cytoplasm. The catalysed reaction is tRNA(Glu) + L-glutamate + ATP = L-glutamyl-tRNA(Glu) + AMP + diphosphate. Functionally, catalyzes the attachment of glutamate to tRNA(Glu) in a two-step reaction: glutamate is first activated by ATP to form Glu-AMP and then transferred to the acceptor end of tRNA(Glu). The polypeptide is Glutamate--tRNA ligase (Rhizobium leguminosarum bv. trifolii (strain WSM2304)).